We begin with the raw amino-acid sequence, 107 residues long: Alpha-elapitoxin-Al2a (107 aa).

The signal sequence occupies residues 1-21 (MKTLLLTLVVVTIVCLDLGDS). Disulfide bonds link cysteine 24–cysteine 41, cysteine 34–cysteine 62, cysteine 47–cysteine 51, cysteine 66–cysteine 77, and cysteine 78–cysteine 83.

It belongs to the three-finger toxin family. Long-chain subfamily. Type II alpha-neurotoxin sub-subfamily. Expressed by the venom gland.

It localises to the secreted. Binds with high affinity to muscular (alpha-1/CHRNA1) and neuronal (alpha-7/CHRNA7) nicotinic acetylcholine receptor (nAChR) and inhibits acetylcholine from binding to the receptor, thereby impairing neuromuscular and neuronal transmission. The sequence is that of Alpha-elapitoxin-Al2a from Austrelaps labialis (Pygmy copperhead).